Reading from the N-terminus, the 511-residue chain is NADH-quinone oxidoreductase subunit N 1 (511 aa).

The next 14 membrane-spanning stretches (helical) occupy residues 15-35, 46-66, 89-109, 120-140, 142-162, 177-197, 221-241, 264-284, 289-309, 317-337, 347-367, 393-413, 426-446, and 471-491; these read LALP…LDLV, ALAL…WQAV, FAIY…LMSI, GEYH…ASGM, LILL…LVGF, LLLG…FYGL, PIAL…IAAV, VAVK…MLWP, YTPI…FAAL, LLAY…VASD, GILV…AVIT, AVLL…AGFW, GHYT…YYYL, and AALW…EVFL.

The protein belongs to the complex I subunit 2 family. As to quaternary structure, NDH-1 is composed of 14 different subunits. Subunits NuoA, H, J, K, L, M, N constitute the membrane sector of the complex.

The protein localises to the cell inner membrane. It catalyses the reaction a quinone + NADH + 5 H(+)(in) = a quinol + NAD(+) + 4 H(+)(out). Functionally, NDH-1 shuttles electrons from NADH, via FMN and iron-sulfur (Fe-S) centers, to quinones in the respiratory chain. The immediate electron acceptor for the enzyme in this species is believed to be ubiquinone. Couples the redox reaction to proton translocation (for every two electrons transferred, four hydrogen ions are translocated across the cytoplasmic membrane), and thus conserves the redox energy in a proton gradient. The polypeptide is NADH-quinone oxidoreductase subunit N 1 (Koribacter versatilis (strain Ellin345)).